The sequence spans 485 residues: Glutamyl-tRNA(Gln) amidotransferase subunit A (485 aa).

Residues K82 and S157 each act as charge relay system in the active site. S181 serves as the catalytic Acyl-ester intermediate.

The protein belongs to the amidase family. GatA subfamily. In terms of assembly, heterotrimer of A, B and C subunits.

It carries out the reaction L-glutamyl-tRNA(Gln) + L-glutamine + ATP + H2O = L-glutaminyl-tRNA(Gln) + L-glutamate + ADP + phosphate + H(+). Its function is as follows. Allows the formation of correctly charged Gln-tRNA(Gln) through the transamidation of misacylated Glu-tRNA(Gln) in organisms which lack glutaminyl-tRNA synthetase. The reaction takes place in the presence of glutamine and ATP through an activated gamma-phospho-Glu-tRNA(Gln). The sequence is that of Glutamyl-tRNA(Gln) amidotransferase subunit A from Treponema denticola (strain ATCC 35405 / DSM 14222 / CIP 103919 / JCM 8153 / KCTC 15104).